Reading from the N-terminus, the 83-residue chain is Apolipoprotein C-I, basic form (83 aa).

An N-terminal signal peptide occupies residues 1–26 (MRLFLSLPVLVVVLSMVLEGPAPAQG).

Belongs to the apolipoprotein C1 family.

It localises to the secreted. In terms of biological role, inhibitor of lipoprotein binding to the low density lipoprotein (LDL) receptor, LDL receptor-related protein, and very low density lipoprotein (VLDL) receptor. Associates with high density lipoproteins (HDL) and the triacylglycerol-rich lipoproteins in the plasma and makes up about 10% of the protein of the VLDL and 2% of that of HDL. Appears to interfere directly with fatty acid uptake and is also the major plasma inhibitor of cholesteryl ester transfer protein (CETP). Binds free fatty acids and reduces their intracellular esterification. Modulates the interaction of APOE with beta-migrating VLDL and inhibits binding of beta-VLDL to the LDL receptor-related protein. The sequence is that of Apolipoprotein C-I, basic form (APOC1B) from Colobus guereza (Mantled guereza).